The chain runs to 765 residues: Putative U-box domain-containing protein 50 (765 aa).

The stretch at 198-391 (QEIENYFQQL…NRRIEFCKER (194 aa)) forms a coiled coil. The 344-residue stretch at 422–765 (SDRLRLKSGG…HSKRAAQASS (344 aa)) folds into the Protein kinase domain. ATP-binding positions include 428–436 (KSGGNWTNV) and Lys-449. The U-box domain occupies 688-762 (DIPSVFMCPI…QDWHSKRAAQ (75 aa)).

The protein belongs to the protein kinase superfamily. Ser/Thr protein kinase family.

The enzyme catalyses S-ubiquitinyl-[E2 ubiquitin-conjugating enzyme]-L-cysteine + [acceptor protein]-L-lysine = [E2 ubiquitin-conjugating enzyme]-L-cysteine + N(6)-ubiquitinyl-[acceptor protein]-L-lysine.. It participates in protein modification; protein ubiquitination. Functions as an E3 ubiquitin ligase. The chain is Putative U-box domain-containing protein 50 (PUB50) from Arabidopsis thaliana (Mouse-ear cress).